Consider the following 323-residue polypeptide: tRNA (guanine(9)-N1)-methyltransferase (323 aa).

Residues 1 to 16 (MTEQTSEATVVNNSPA) are compositionally biased toward polar residues. 2 disordered regions span residues 1–34 (MTEQTSEATVVNNSPAPTIPKIKREKPTPEEIEE) and 192–215 (TGAPNSESKDNDGNSNSNTTNSTD). Positions 25 to 34 (EKPTPEEIEE) are enriched in basic and acidic residues. Residues 99-319 (KAQPIPSRQI…KVLPPRKIKS (221 aa)) enclose the SAM-dependent MTase TRM10-type domain. Residues 204–215 (GNSNSNTTNSTD) show a composition bias toward low complexity. Residues 225-226 (LT), G245, 249-253 (DKNRH), C257, L271, and 283-285 (HVL) contribute to the S-adenosyl-L-methionine site. Catalysis depends on D249, which acts as the Proton acceptor.

Belongs to the class IV-like SAM-binding methyltransferase superfamily. TRM10 family. As to quaternary structure, monomer.

It is found in the cytoplasm. The protein resides in the nucleus. The catalysed reaction is guanosine(9) in tRNA + S-adenosyl-L-methionine = N(1)-methylguanosine(9) in tRNA + S-adenosyl-L-homocysteine + H(+). S-adenosyl-L-methionine-dependent guanine N(1)-methyltransferase that catalyzes the formation of N(1)-methylguanine at position 9 (m1G9) in cytoplasmic tRNA. This is tRNA (guanine(9)-N1)-methyltransferase from Candida albicans (strain SC5314 / ATCC MYA-2876) (Yeast).